Reading from the N-terminus, the 1455-residue chain is Fanconi anemia group A protein (1455 aa).

A Nuclear localization signal motif is present at residues 18 to 34; the sequence is RRRAWAELLAGRVKREK. Phosphoserine is present on S1449.

In terms of assembly, belongs to the multisubunit FA complex composed of FANCA, FANCB, FANCC, FANCE, FANCF, FANCG, FANCL/PHF9 and FANCM. The complex is not found in FA patients. In complex with FANCF, FANCG and FANCL, but not with FANCC, nor FANCE, interacts with HES1; this interaction may be essential for the stability and nuclear localization of FA core complex proteins. The complex with FANCC and FANCG may also include EIF2AK2 and HSP70. Interacts with FAAP20/C1orf86; interaction is direct. Post-translationally, phosphorylation is required for the formation of the nuclear complex. Not phosphorylated in cells derived from groups A, B, C, E, F, G, and H.

It localises to the nucleus. The protein resides in the cytoplasm. Its function is as follows. DNA repair protein that may operate in a postreplication repair or a cell cycle checkpoint function. May be involved in interstrand DNA cross-link repair and in the maintenance of normal chromosome stability. This Homo sapiens (Human) protein is Fanconi anemia group A protein (FANCA).